The chain runs to 397 residues: Transcription factor xenB (397 aa).

The disordered stretch occupies residues 220-249 (TISDFETGDRQTISRSDTNSEVRPIPESPS). Over residues 229-240 (RQTISRSDTNSE) the composition is skewed to polar residues.

Functionally, transcription factor; part of the gene cluster that mediates the biosynthesis of xenoacremones such as xenoacremone A, a compound that shows inhibitory activity toward the PI3K/AKT signaling pathway and which has the ability to induce apoptosis of A549 lung cancer cells. Acts as a positive regulator of the xenoacremones biosynthesis gene cluster. This Xenoacremonium sinensis (Endophyte fungus) protein is Transcription factor xenB.